The sequence spans 188 residues: Putative 3-methyladenine DNA glycosylase (188 aa).

It belongs to the DNA glycosylase MPG family.

The protein is Putative 3-methyladenine DNA glycosylase of Ehrlichia ruminantium (strain Welgevonden).